A 547-amino-acid chain; its full sequence is Chaperonin GroEL (547 aa).

Residues Thr29–Pro32, Lys50, Asp86–Thr90, Gly414, Asn477–Ala479, and Asp493 contribute to the ATP site.

The protein belongs to the chaperonin (HSP60) family. As to quaternary structure, forms a cylinder of 14 subunits composed of two heptameric rings stacked back-to-back. Interacts with the co-chaperonin GroES.

The protein localises to the cytoplasm. It carries out the reaction ATP + H2O + a folded polypeptide = ADP + phosphate + an unfolded polypeptide.. In terms of biological role, together with its co-chaperonin GroES, plays an essential role in assisting protein folding. The GroEL-GroES system forms a nano-cage that allows encapsulation of the non-native substrate proteins and provides a physical environment optimized to promote and accelerate protein folding. The sequence is that of Chaperonin GroEL from Campylobacter rectus (Wolinella recta).